Consider the following 795-residue polypeptide: MLKTLNRRSWTCRQCIRILRRNAETRRYFQGASAASPLCQHTVSSSTSDKARDDQTLRLIFDSEPFWREFSQPKSSTSKRTGLLQNQYLTGPDGFLQFAQVSLQKCQKIVAKVIAASTLEDYRGMVRDLDRLSDLLCRVIDMAEFMKLNHPSPQIQDAATQAYALMFEYMNVLNTTPELDAQLKRASADLNVTSHWSPEEKVAARVLLKDFSQSAIHLPPKDRQKFVALSNEISQLGPMFVTNRQPETDHVTVDKNKLRGMDPSLIQQLQRWRKVAVPMFGDIPRIALYSVHDEETRKEIYVTSRTSSKVQIRRLETLLQKRAELAKLAGFPSYAHMTLSDKMAKTPEAVVNFLEALNASNRGQVQDELSQLLALKQADVPSATQLQPWDHAYYVHQYSARHSRVRRSRESTLLPAFFSIGTVIQGLSRLFTRLYGIRLVPTETLPGEIWNPDVRRLDVVDESDRRLAVIYCDLFTRPYKSPNPTHFTLRGSREISQAEIAECADLSSSLHPNDGMATTIKPETNKLYQLPTVALICDFDQSESRSTPSLLNEHNLETLFHEMGHAVHSVLARTDLQTISGTRCATDFVELPSVIMENFATAPEVLALYARHWETNEPLPEHMVKSMELNRQSRVSMHGGMDNEVQILMALLDQAYHSSRPLEPNFDSTRIYHDVYSTHSSLPDPPGSRTSWQGYFAHLVGYGATYYSYLFDRAIANKVWSDVFKGGELSTNRDAGERFKNEVLRWGGGRDGWNCVAGLLGNNPANDNGKLAEGGEEAMREVGRWGLGLMGTSEL.

Residues 1–22 constitute a mitochondrion transit peptide; that stretch reads MLKTLNRRSWTCRQCIRILRRN. Zn(2+) is bound at residue His-561. Glu-562 is a catalytic residue. Zn(2+)-binding residues include His-565 and His-568.

Belongs to the peptidase M3 family. Zn(2+) serves as cofactor.

It is found in the mitochondrion matrix. The catalysed reaction is Release of an N-terminal octapeptide as second stage of processing of some proteins imported into the mitochondrion.. Cleaves proteins, imported into the mitochondrion, to their mature size. While most mitochondrial precursor proteins are processed to the mature form in one step by mitochondrial processing peptidase (MPP), the sequential cleavage by MIP of an octapeptide after initial processing by MPP is a required step for a subgroup of nuclear-encoded precursor proteins destined for the matrix or the inner membrane. This is Mitochondrial intermediate peptidase (OCT1) from Coccidioides immitis (strain RS) (Valley fever fungus).